A 194-amino-acid polypeptide reads, in one-letter code: Imidazole glycerol phosphate synthase subunit HisH (194 aa).

The Glutamine amidotransferase type-1 domain occupies 1–194 (MIIIDTGCAN…QLLKNFVENL (194 aa)). Cys75 serves as the catalytic Nucleophile. Residues His175 and Glu177 contribute to the active site.

Heterodimer of HisH and HisF.

Its subcellular location is the cytoplasm. The catalysed reaction is 5-[(5-phospho-1-deoxy-D-ribulos-1-ylimino)methylamino]-1-(5-phospho-beta-D-ribosyl)imidazole-4-carboxamide + L-glutamine = D-erythro-1-(imidazol-4-yl)glycerol 3-phosphate + 5-amino-1-(5-phospho-beta-D-ribosyl)imidazole-4-carboxamide + L-glutamate + H(+). It catalyses the reaction L-glutamine + H2O = L-glutamate + NH4(+). It functions in the pathway amino-acid biosynthesis; L-histidine biosynthesis; L-histidine from 5-phospho-alpha-D-ribose 1-diphosphate: step 5/9. Its function is as follows. IGPS catalyzes the conversion of PRFAR and glutamine to IGP, AICAR and glutamate. The HisH subunit catalyzes the hydrolysis of glutamine to glutamate and ammonia as part of the synthesis of IGP and AICAR. The resulting ammonia molecule is channeled to the active site of HisF. The polypeptide is Imidazole glycerol phosphate synthase subunit HisH (Mannheimia succiniciproducens (strain KCTC 0769BP / MBEL55E)).